We begin with the raw amino-acid sequence, 408 residues long: Dual-specificity RNA methyltransferase RlmN (408 aa).

Glu120 acts as the Proton acceptor in catalysis. Residues 126-375 (EEGRGTLCIS…IRTPRGRDIL (250 aa)) enclose the Radical SAM core domain. An intrachain disulfide couples Cys133 to Cys378. 3 residues coordinate [4Fe-4S] cluster: Cys140, Cys144, and Cys147. Residues 204-205 (GE), Ser236, 258-260 (SLH), and Asn335 each bind S-adenosyl-L-methionine. Cys378 acts as the S-methylcysteine intermediate in catalysis.

It belongs to the radical SAM superfamily. RlmN family. [4Fe-4S] cluster is required as a cofactor.

It is found in the cytoplasm. The enzyme catalyses adenosine(2503) in 23S rRNA + 2 reduced [2Fe-2S]-[ferredoxin] + 2 S-adenosyl-L-methionine = 2-methyladenosine(2503) in 23S rRNA + 5'-deoxyadenosine + L-methionine + 2 oxidized [2Fe-2S]-[ferredoxin] + S-adenosyl-L-homocysteine. It carries out the reaction adenosine(37) in tRNA + 2 reduced [2Fe-2S]-[ferredoxin] + 2 S-adenosyl-L-methionine = 2-methyladenosine(37) in tRNA + 5'-deoxyadenosine + L-methionine + 2 oxidized [2Fe-2S]-[ferredoxin] + S-adenosyl-L-homocysteine. Functionally, specifically methylates position 2 of adenine 2503 in 23S rRNA and position 2 of adenine 37 in tRNAs. m2A2503 modification seems to play a crucial role in the proofreading step occurring at the peptidyl transferase center and thus would serve to optimize ribosomal fidelity. The sequence is that of Dual-specificity RNA methyltransferase RlmN from Rhizobium johnstonii (strain DSM 114642 / LMG 32736 / 3841) (Rhizobium leguminosarum bv. viciae).